The chain runs to 584 residues: MALWERGAGGAAEAGEDATEEPERGLPLLPWDRFSAWLHCVCVVGFDLELGQAVEVIYPPHSKLTDKEKTNICYLSFPDSNSGCLGDTQFCFRFRRSSGRKASLCCFLDHLDRDLPVYLKKDPAYYYGYVYFRQVRDKSLKRGYFQKSLVLISKLPYIHLFRTVLKQIAPEYFEKSEAFLEAVCSDVDRWPPPVPGEVLHLPIMGVVMKLRIPTYRDKPGTTPVVQNMHQADAQISMTLPTVHEVDLFRCFCPVFFHIQMLWELVLLGEPLVVMAPSPAESSETVLALVSCISPLKYCSDFRPYFTIHDSEFKEYTTRTQAPPSVILGVTNPFFAKTLQHWPHIIRIGDMKLPGDVPKQVKVKKLKNLKTLDSKPGVYTSYKPYLDKDEEIVKQLQKGVQQKRPTEAQSAILRRYFLELTESFIIPLERYVASLMPLQKCISPWKSPPQLRHFSQDDFMKTLEKAGPQLTSGLKGDWIGLYRHFLKSPNFDGWFRSRQKEMTQNLEALHLEALCNENLVFWSQKHTEVETVDLVLKLKNKLLQADREHLPVKTDTLKKLQTHIRDIILALPDDLQDILLKTGTA.

The segment at 1–23 (MALWERGAGGAAEAGEDATEEPE) is disordered. In terms of domain architecture, uDENN spans 39 to 218 (HCVCVVGFDL…KLRIPTYRDK (180 aa)). The 126-residue stretch at 244–369 (EVDLFRCFCP…VKVKKLKNLK (126 aa)) folds into the cDENN domain. Positions 371 to 504 (LDSKPGVYTS…RSRQKEMTQN (134 aa)) constitute a dDENN domain.

Belongs to the DENND6 family.

The protein resides in the recycling endosome. It is found in the cytoplasm. Its function is as follows. Guanine nucleotide exchange factor (GEF) for RAB14. This Gallus gallus (Chicken) protein is Protein DENND6A (DENND6A).